A 308-amino-acid polypeptide reads, in one-letter code: Ribosomal RNA large subunit methyltransferase F (308 aa).

This sequence belongs to the methyltransferase superfamily. METTL16/RlmF family.

The protein localises to the cytoplasm. The catalysed reaction is adenosine(1618) in 23S rRNA + S-adenosyl-L-methionine = N(6)-methyladenosine(1618) in 23S rRNA + S-adenosyl-L-homocysteine + H(+). Specifically methylates the adenine in position 1618 of 23S rRNA. The sequence is that of Ribosomal RNA large subunit methyltransferase F from Escherichia coli O157:H7.